A 492-amino-acid chain; its full sequence is 2,3-bisphosphoglycerate-independent phosphoglycerate mutase (492 aa).

2 residues coordinate Mn(2+): Asp-11 and Ser-61. The active-site Phosphoserine intermediate is Ser-61. Substrate-binding positions include His-118, 147 to 148 (RD), Arg-177, Arg-183, 248 to 251 (RSDR), and Lys-321. Residues Asp-387, His-391, Asp-428, His-429, and His-446 each contribute to the Mn(2+) site.

Belongs to the BPG-independent phosphoglycerate mutase family. As to quaternary structure, monomer. Mn(2+) is required as a cofactor.

The enzyme catalyses (2R)-2-phosphoglycerate = (2R)-3-phosphoglycerate. It participates in carbohydrate degradation; glycolysis; pyruvate from D-glyceraldehyde 3-phosphate: step 3/5. Functionally, catalyzes the interconversion of 2-phosphoglycerate and 3-phosphoglycerate. In Wolinella succinogenes (strain ATCC 29543 / DSM 1740 / CCUG 13145 / JCM 31913 / LMG 7466 / NCTC 11488 / FDC 602W) (Vibrio succinogenes), this protein is 2,3-bisphosphoglycerate-independent phosphoglycerate mutase.